Here is a 144-residue protein sequence, read N- to C-terminus: Large ribosomal subunit protein uL16 (144 aa).

Residues 1-19 (MLLPKRVKYRRQHRPKTTG) show a composition bias toward basic residues. Positions 1-23 (MLLPKRVKYRRQHRPKTTGRSKG) are disordered.

The protein belongs to the universal ribosomal protein uL16 family. Part of the 50S ribosomal subunit.

Its function is as follows. Binds 23S rRNA and is also seen to make contacts with the A and possibly P site tRNAs. The sequence is that of Large ribosomal subunit protein uL16 from Staphylococcus epidermidis (strain ATCC 35984 / DSM 28319 / BCRC 17069 / CCUG 31568 / BM 3577 / RP62A).